A 341-amino-acid chain; its full sequence is MANILEPFGIRIDADNSFVQAAVTGFLLVGIASFAAPLISTIRVLLSLFVLPGKSLTTFGPRGTWALITGASDGIGKEFALSLAAKGYNLILVSRTQSKLDSLSADITSKYGPKIAVKTLAMDFALNKDADYNNMKKLIEGLDVSILINNVGLSHSIPVPFTETPKQEMTDIIMINCMATLRVTQLVTPGMVSRKRGLVLTMASFGGFFPTPLLATYSGSKAFLQQWSTALASELEPHGVYVQCVQSHLVTTAMSKIRKTSALVPNPKQFVDATLSKIGRSGGAQGVAFTSTPYWSHGLMHWFLSRFLGERSETVVKVNRGMHENIRRRALRKAERDAKKQ.

The chain crosses the membrane as a helical span at residues 22-42 (AVTGFLLVGIASFAAPLISTI). 8 residues coordinate NADP(+): Leu67, Asp123, Asp131, Asn150, Tyr217, Lys221, Val250, and Thr252. Tyr217 functions as the Proton donor in the catalytic mechanism. The Lowers pKa of active site Tyr role is filled by Lys221.

Belongs to the short-chain dehydrogenases/reductases (SDR) family.

Its subcellular location is the endoplasmic reticulum membrane. It catalyses the reaction a very-long-chain (3R)-3-hydroxyacyl-CoA + NADP(+) = a very-long-chain 3-oxoacyl-CoA + NADPH + H(+). It functions in the pathway lipid metabolism; fatty acid biosynthesis. Functionally, component of the microsomal membrane bound fatty acid elongation system, which produces the 26-carbon very long-chain fatty acids (VLCFA) from palmitate. Catalyzes the reduction of the 3-ketoacyl-CoA intermediate that is formed in each cycle of fatty acid elongation. VLCFAs serve as precursors for ceramide and sphingolipids. The protein is Very-long-chain 3-oxoacyl-CoA reductase of Pyrenophora tritici-repentis (strain Pt-1C-BFP) (Wheat tan spot fungus).